The sequence spans 360 residues: MEVTPNHTQTVSGWAAMDESGKIVPFVFKRRENGVDDVTIKVKYCGMCHTDLHFIHNDWGITMYPVVPGHEITGVVTKVGTNVAGFKVGDRVGVGCIAASCLDCEHCRRSEENYCDKVALTYNGIFWDGSITYGGYSGMLVAHKRFVVRIPDTLPLDAAAPLLCAGITVYSPMKQHGMLQADAAGRRLGVVGLGGLGHVAVKFGKAFGLHVTVISTSPAKEREARENLKADNFVVSTDQKQMQAMTRSLDYIIDTVAATHSLGPILELLKVNGKLVLVGAPEKPVELPSFPLIFGKRTVSGSMTGGMKETQEMMDICGEHNITCDIEIVSTDRINDALARLARNDVRYRFVINVGGDSKL.

Cys-48 contacts Zn(2+). Position 50 (Thr-50) interacts with NADP(+). Zn(2+) contacts are provided by His-70, Glu-71, Cys-101, Cys-104, Cys-107, Cys-115, and Cys-164. NADP(+) contacts are provided by residues Thr-168, Gly-192–Gly-197, Ser-215–Lys-220, Thr-255, Gly-279, and Ser-302–Thr-304.

It belongs to the zinc-containing alcohol dehydrogenase family. Homodimer. It depends on Zn(2+) as a cofactor.

It carries out the reaction (E)-cinnamyl alcohol + NADP(+) = (E)-cinnamaldehyde + NADPH + H(+). It catalyses the reaction (E)-coniferol + NADP(+) = (E)-coniferaldehyde + NADPH + H(+). The enzyme catalyses (E)-sinapyl alcohol + NADP(+) = (E)-sinapaldehyde + NADPH + H(+). The catalysed reaction is (E)-4-coumaroyl alcohol + NADP(+) = (E)-4-coumaraldehyde + NADPH + H(+). It carries out the reaction (E)-caffeyl alcohol + NADP(+) = (E)-caffeyl aldehyde + NADPH + H(+). The protein operates within aromatic compound metabolism; phenylpropanoid biosynthesis. Functionally, involved in lignin biosynthesis. Catalyzes the final step specific for the production of lignin monomers. Catalyzes the NADPH-dependent reduction of coniferaldehyde, 5-hydroxyconiferaldehyde, sinapaldehyde, 4-coumaraldehyde and caffeyl aldehyde to their respective alcohols. In Oryza sativa subsp. japonica (Rice), this protein is Probable cinnamyl alcohol dehydrogenase 6.